A 385-amino-acid chain; its full sequence is 8-amino-7-oxononanoate synthase (385 aa).

Substrate is bound at residue arginine 21. 108–109 (GF) serves as a coordination point for pyridoxal 5'-phosphate. Histidine 133 is a substrate binding site. Residues serine 179, histidine 207, and threonine 233 each coordinate pyridoxal 5'-phosphate. Residue lysine 236 is modified to N6-(pyridoxal phosphate)lysine. Threonine 352 contributes to the substrate binding site.

The protein belongs to the class-II pyridoxal-phosphate-dependent aminotransferase family. BioF subfamily. Homodimer. Requires pyridoxal 5'-phosphate as cofactor.

The catalysed reaction is 6-carboxyhexanoyl-[ACP] + L-alanine + H(+) = (8S)-8-amino-7-oxononanoate + holo-[ACP] + CO2. Its pathway is cofactor biosynthesis; biotin biosynthesis. Its function is as follows. Catalyzes the decarboxylative condensation of pimeloyl-[acyl-carrier protein] and L-alanine to produce 8-amino-7-oxononanoate (AON), [acyl-carrier protein], and carbon dioxide. The sequence is that of 8-amino-7-oxononanoate synthase from Salmonella paratyphi B (strain ATCC BAA-1250 / SPB7).